A 260-amino-acid polypeptide reads, in one-letter code: Indole-3-glycerol phosphate synthase (260 aa).

It belongs to the TrpC family.

It catalyses the reaction 1-(2-carboxyphenylamino)-1-deoxy-D-ribulose 5-phosphate + H(+) = (1S,2R)-1-C-(indol-3-yl)glycerol 3-phosphate + CO2 + H2O. It functions in the pathway amino-acid biosynthesis; L-tryptophan biosynthesis; L-tryptophan from chorismate: step 4/5. In Koribacter versatilis (strain Ellin345), this protein is Indole-3-glycerol phosphate synthase.